A 635-amino-acid polypeptide reads, in one-letter code: Threonine--tRNA ligase (635 aa).

Positions 1–61 constitute a TGS domain; it reads MIQITLPDSS…SQDSALSIVT (61 aa). The tract at residues 242 to 533 is catalytic; it reads DHRKLGKELD…LIEEHAGALP (292 aa). Residues cysteine 333, histidine 384, and histidine 510 each contribute to the Zn(2+) site.

The protein belongs to the class-II aminoacyl-tRNA synthetase family. In terms of assembly, homodimer. The cofactor is Zn(2+).

It is found in the cytoplasm. The enzyme catalyses tRNA(Thr) + L-threonine + ATP = L-threonyl-tRNA(Thr) + AMP + diphosphate + H(+). Catalyzes the attachment of threonine to tRNA(Thr) in a two-step reaction: L-threonine is first activated by ATP to form Thr-AMP and then transferred to the acceptor end of tRNA(Thr). Also edits incorrectly charged L-seryl-tRNA(Thr). The protein is Threonine--tRNA ligase of Polaromonas naphthalenivorans (strain CJ2).